Here is a 66-residue protein sequence, read N- to C-terminus: Conotoxin Ca5.2 (66 aa).

A signal peptide spans 1–22 (MRCVPVFLILLGLIASAPSVDA). Positions 23-48 (RPQTKDDALASFHDSAKRHLQRLVNA) are excised as a propeptide. The residue at position 62 (Phe62) is a Phenylalanine amide.

This sequence belongs to the conotoxin T superfamily. Contains 2 disulfide bonds that can be either 'C1-C3, C2-C4' or 'C1-C4, C2-C3', since these disulfide connectivities have been observed for conotoxins with cysteine framework V (for examples, see AC P0DQQ7 and AC P81755). In terms of tissue distribution, expressed by the venom duct.

It localises to the secreted. In Conus caracteristicus (Characteristic cone), this protein is Conotoxin Ca5.2.